Reading from the N-terminus, the 279-residue chain is Epidermal growth factor-like protein 7 (279 aa).

Positions 1–21 (MWGSGELLVAWFLVLAAGGTT) are cleaved as a signal peptide. An EMI domain is found at 28-109 (SRRVCTVGVS…TNGLPGACGA (82 aa)). Disulfide bonds link Cys32/Cys94, Cys57/Cys63, Cys93/Cys107, Cys112/Cys122, Cys116/Cys128, Cys130/Cys139, Cys146/Cys157, Cys153/Cys166, and Cys168/Cys181. The EGF-like 1 domain occupies 108-140 (GAAICQPPCGNEGSCIRPGRCRCPVGWQGDTCQ). The Cell attachment site motif lies at 131–133 (PVG). Residues 142-182 (DVDECSTGEARCPQRCVNTVGSYWCQCWEGQSPSADGVLCL) form the EGF-like 2; calcium-binding domain. Coiled-coil stretches lie at residues 200 to 224 (SVVREEVYKLQARVDVLEQKLQLVL) and 250 to 274 (FQQLDRIDSLSEQVSFLEEQLGSCS).

As to quaternary structure, interacts with ITGAV/ITGB3 in an RGD-dependent manner, increasing endothelial cell's motility.

It is found in the secreted. The protein localises to the extracellular space. Its function is as follows. Regulates vascular tubulogenesis in vivo. Inhibits platelet-derived growth factor (PDGF)-BB-induced smooth muscle cell migration and promotes endothelial cell adhesion to the extracellular matrix and angiogenesis. The chain is Epidermal growth factor-like protein 7 (Egfl7) from Rattus norvegicus (Rat).